Consider the following 232-residue polypeptide: MEKERQDGLSDKHKFILQYIMCRTAGVDNEQVRELVQEQYGETATVEDVINELNNSLHNFDFKIKRVQDQLDGRLTLHFQNLSGDPVSQMATPYPPVQIELMRKIIEWIMKCDDYQYSLTTLQIQKLSRKEMGLAPSVIESHLHTFERDGWLRQREGIWTFTNHALAELDAYLHNEYESNLYECNACREIVIAGYVCDCGYCLHVYCCKHLAHVNCINCNTPWANATVIGRW.

Residues 181 to 222 form an RING-type; atypical zinc finger; it reads LYECNACREIVIAGYVCDCGYCLHVYCCKHLAHVNCINCNTP.

It belongs to the NSE1 family. As to quaternary structure, two subcomplexes smc5-smc6-nse2 and nse1-nse3-nse4 exist. These subcomplexes are then brought together via a number of interactions, forming the Smc5-Smc6 complex.

The protein localises to the nucleus. The catalysed reaction is S-ubiquitinyl-[E2 ubiquitin-conjugating enzyme]-L-cysteine + [acceptor protein]-L-lysine = [E2 ubiquitin-conjugating enzyme]-L-cysteine + N(6)-ubiquitinyl-[acceptor protein]-L-lysine.. Its function is as follows. Acts in a DNA repair pathway for removal of UV-induced DNA damage that is distinct from classical nucleotide excision repair and in repair of ionizing radiation damage. Functions in homologous recombination repair of DNA double strand breaks and in recovery of stalled replication forks. Plays a critical role in meiosis. This chain is Non-structural maintenance of chromosomes element 1 (nse1), found in Schizosaccharomyces pombe (strain 972 / ATCC 24843) (Fission yeast).